A 52-amino-acid chain; its full sequence is Large ribosomal subunit protein bL33 (52 aa).

It belongs to the bacterial ribosomal protein bL33 family.

The polypeptide is Large ribosomal subunit protein bL33 (Anaeromyxobacter dehalogenans (strain 2CP-C)).